The chain runs to 145 residues: Transcription antitermination protein NusB (145 aa).

It belongs to the NusB family.

Involved in transcription antitermination. Required for transcription of ribosomal RNA (rRNA) genes. Binds specifically to the boxA antiterminator sequence of the ribosomal RNA (rrn) operons. This chain is Transcription antitermination protein NusB, found in Psychromonas ingrahamii (strain DSM 17664 / CCUG 51855 / 37).